A 267-amino-acid chain; its full sequence is 22 kDa alpha-zein 14 (267 aa).

An N-terminal signal peptide occupies residues 1-21; sequence MATKILSLLALLALFASATNA.

It belongs to the zein family.

Zeins are major seed storage proteins. This chain is 22 kDa alpha-zein 14, found in Zea mays (Maize).